The following is a 360-amino-acid chain: Membrane-bound lytic murein transglycosylase C (360 aa).

The N-terminal stretch at 1–16 is a signal peptide; sequence MKKLLALAVIAPLLIS. A lipid anchor (N-palmitoyl cysteine) is attached at Cys17. Cys17 carries the S-diacylglycerol cysteine lipid modification.

The protein belongs to the transglycosylase Slt family.

Its subcellular location is the cell outer membrane. It catalyses the reaction Exolytic cleavage of the (1-&gt;4)-beta-glycosidic linkage between N-acetylmuramic acid (MurNAc) and N-acetylglucosamine (GlcNAc) residues in peptidoglycan, from either the reducing or the non-reducing ends of the peptidoglycan chains, with concomitant formation of a 1,6-anhydrobond in the MurNAc residue.. Functionally, murein-degrading enzyme. May play a role in recycling of muropeptides during cell elongation and/or cell division. The chain is Membrane-bound lytic murein transglycosylase C from Salmonella arizonae (strain ATCC BAA-731 / CDC346-86 / RSK2980).